We begin with the raw amino-acid sequence, 60 residues long: Serum basic protease inhibitor (60 aa).

The region spanning 7–57 is the BPTI/Kunitz inhibitor domain; it reads CLEPPYTGPCKAAMIRYFYNAKAGFCETFVYGGCRAKSNNFKSAEDCMRTC. 3 disulfides stabilise this stretch: cysteine 7–cysteine 57, cysteine 16–cysteine 40, and cysteine 32–cysteine 53.

It is found in the secreted. Functionally, this inhibitor has activity very similar to that of the basic protease inhibitor from bovine tissues. The polypeptide is Serum basic protease inhibitor (Bos taurus (Bovine)).